A 167-amino-acid polypeptide reads, in one-letter code: Homing endonuclease I-ApeII (167 aa).

This sequence belongs to the LAGLIDADG endonuclease family.

Its function is as follows. Endonuclease involved in rRNA intron I-gamma homing. The sequence is that of Homing endonuclease I-ApeII (apeII) from Aeropyrum pernix (strain ATCC 700893 / DSM 11879 / JCM 9820 / NBRC 100138 / K1).